The following is a 384-amino-acid chain: Lipid-A-disaccharide synthase (384 aa).

It belongs to the LpxB family.

The enzyme catalyses a lipid X + a UDP-2-N,3-O-bis[(3R)-3-hydroxyacyl]-alpha-D-glucosamine = a lipid A disaccharide + UDP + H(+). Its pathway is bacterial outer membrane biogenesis; LPS lipid A biosynthesis. Condensation of UDP-2,3-diacylglucosamine and 2,3-diacylglucosamine-1-phosphate to form lipid A disaccharide, a precursor of lipid A, a phosphorylated glycolipid that anchors the lipopolysaccharide to the outer membrane of the cell. In Geobacter sulfurreducens (strain ATCC 51573 / DSM 12127 / PCA), this protein is Lipid-A-disaccharide synthase.